Here is a 399-residue protein sequence, read N- to C-terminus: Elongation factor Tu (399 aa).

A tr-type G domain is found at 10–204 (KPHVNIGTIG…AVDASIPEPE (195 aa)). Positions 19-26 (GHVDHGKT) are G1. 19–26 (GHVDHGKT) lines the GTP pocket. T26 serves as a coordination point for Mg(2+). The segment at 60 to 64 (GITIN) is G2. Residues 81–84 (DCPG) form a G3 region. GTP-binding positions include 81–85 (DCPGH) and 136–139 (NKCD). The G4 stretch occupies residues 136-139 (NKCD). The tract at residues 174-176 (SGL) is G5.

This sequence belongs to the TRAFAC class translation factor GTPase superfamily. Classic translation factor GTPase family. EF-Tu/EF-1A subfamily. In terms of assembly, monomer.

It localises to the cytoplasm. It carries out the reaction GTP + H2O = GDP + phosphate + H(+). Its function is as follows. GTP hydrolase that promotes the GTP-dependent binding of aminoacyl-tRNA to the A-site of ribosomes during protein biosynthesis. The sequence is that of Elongation factor Tu from Prochlorococcus marinus subsp. pastoris (strain CCMP1986 / NIES-2087 / MED4).